The primary structure comprises 570 residues: MDEVDKIIMHQLHQIDASIEPTEELANFTPALVVRAVASCLQEISQSLKDLPRSLPMAMAQRFNVATILAERCQESGYRGDIGYQTFLYPNPVELRRLLMFLIEQLPRERQSEDDANRTSHPLSSREQLERQIRQKLKAQLKMPWVPQFCRMVANRKSLGCNSQCISFEPQLNLNVPSANPEDRSKEVQQYFDQQAPNLFQQTSANCYDLIASVMHKNDLERWGDLPSMDPVTLTSTSDDLVGKALPTSPTQTSTTAEKAAQDNSSEATATSTTTTPLELLGQEVQELRTQTEIMLNHRKMVTSKLNELKIRETTASQEKETIESKLKSHEKLSLVLSEPEENVGKLEALVEATENKRQTLNQQWQDYRRPLLDTLSTLRNAQEAQQVQIIRNSIEKLEQEIIAKSQQHNELNSSLKNATQSVAPRQEYTRRIHEFIKNIRKQREDIFKVLDDTRQLQKQLNVVNAQLQRQFNYTDDLLFQSAKHDLHAKKAYKLLAQLHSNCSELVECVSLTGNVTKEIRDLEVQIDGEKLKNVLSRLQQITGDIQRSEQHIQELQTQIRQVENAITVG.

2 disordered regions span residues 110–129 (RQSEDDANRTSHPLSSREQL) and 234–280 (LTST…PLEL). Polar residues predominate over residues 248–257 (TSPTQTSTTA). Over residues 265-276 (SSEATATSTTTT) the composition is skewed to low complexity. Coiled-coil stretches lie at residues 308–471 (ELKI…LQRQ) and 529–570 (GEKL…ITVG).

Belongs to the CCDC22 family.

The sequence is that of Coiled-coil domain-containing protein 22 homolog from Drosophila willistoni (Fruit fly).